A 315-amino-acid polypeptide reads, in one-letter code: Ribose-phosphate pyrophosphokinase (315 aa).

ATP contacts are provided by residues 37–39 (DGE) and 96–97 (RQ). Mg(2+) contacts are provided by His-131 and Asp-170. Residue Lys-194 is part of the active site. D-ribose 5-phosphate is bound by residues Arg-196, Asp-220, and 224 to 228 (DTGGT).

This sequence belongs to the ribose-phosphate pyrophosphokinase family. Class I subfamily. Homohexamer. The cofactor is Mg(2+).

The protein localises to the cytoplasm. The catalysed reaction is D-ribose 5-phosphate + ATP = 5-phospho-alpha-D-ribose 1-diphosphate + AMP + H(+). It participates in metabolic intermediate biosynthesis; 5-phospho-alpha-D-ribose 1-diphosphate biosynthesis; 5-phospho-alpha-D-ribose 1-diphosphate from D-ribose 5-phosphate (route I): step 1/1. In terms of biological role, involved in the biosynthesis of the central metabolite phospho-alpha-D-ribosyl-1-pyrophosphate (PRPP) via the transfer of pyrophosphoryl group from ATP to 1-hydroxyl of ribose-5-phosphate (Rib-5-P). The sequence is that of Ribose-phosphate pyrophosphokinase from Buchnera aphidicola subsp. Acyrthosiphon pisum (strain APS) (Acyrthosiphon pisum symbiotic bacterium).